A 446-amino-acid chain; its full sequence is Zinc finger protein BALDIBIS (446 aa).

Residues 20-53 are disordered; the sequence is EHIAPNPNPNPNPTSSNSAKRKRNLPGNPDPDAE. Phosphoserine is present on Ser-58. C2H2-type zinc fingers lie at residues 68-90 and 110-140; these read FICEVCNKGFKRDQNLQLHRRGH and YICPEKTCVHHDPARALGDLTGIKKHFSRKH. Positions 132-139 match the Nuclear localization signal motif; sequence IKKHFSRK. The C2H2-type 2; degenerate zinc-finger motif lies at 145–168; it reads WKCDKCSKKYAVMSDWKAHSKICG. The Zn(2+) site is built by Cys-147, Cys-150, His-163, Cys-167, Cys-174, Cys-176, His-189, and Cys-193. The CCHC-type 2; atypical zinc-finger motif lies at 172–195; it reads YRCDCGTLFSRKDSFITHRAFCDA. Positions 182-194 are SHR-binding; the sequence is RKDSFITHRAFCD. The interval 425 to 446 is disordered; it reads HNLPDSSPPASTDGTPTADMNQ. The segment covering 427–446 has biased composition (polar residues); that stretch reads LPDSSPPASTDGTPTADMNQ.

As to quaternary structure, binds to RGA and SCL3 competitively in the nucleus. As to expression, expressed in roots, especially in vascular initials, cortex, endodermis, and quiescent center (QC).

The protein resides in the nucleus. Its function is as follows. Transcription factor that, together with JKD, regulates tissue boundaries and asymmetric cell division in roots by a rapid up-regulation of 'SCARECROW' (SCR), thus controlling the nuclear localization of 'SHORT-ROOT' (SHR) and restricting its action. Confines CYCD6 expression to the cortex-endodermis initial/daughter (CEI/CEID) tissues. Binds DNA via its zinc fingers. Recognizes and binds to SCL3 promoter sequence 5'-AGACAA-3' to promote its expression when in complex with RGA. This chain is Zinc finger protein BALDIBIS, found in Arabidopsis thaliana (Mouse-ear cress).